A 91-amino-acid chain; its full sequence is Small ribosomal subunit protein uS19 (91 aa).

It belongs to the universal ribosomal protein uS19 family.

Functionally, protein S19 forms a complex with S13 that binds strongly to the 16S ribosomal RNA. In Janthinobacterium sp. (strain Marseille) (Minibacterium massiliensis), this protein is Small ribosomal subunit protein uS19.